The following is an 840-amino-acid chain: Axin-2 (840 aa).

The interval 1-75 (MSSAVLVTLL…EGRASPDSPL (75 aa)) is disordered. The short motif at 21–30 (APRPPVPGEE) is the Tankyrase-binding motif element. The segment covering 42 to 55 (KVQSTKPMPVSSNA) has biased composition (polar residues). Residues 56–69 (RRNEDGLGEPEGRA) are compositionally biased toward basic and acidic residues. The RGS domain maps to 81–200 (SLHSLLGDQD…LTSDIYLEYV (120 aa)). Disordered stretches follow at residues 300–363 (SELS…KEMT), 398–435 (IRED…EEDP), 447–485 (LKTP…LLPT), 572–614 (RGGT…GDRS), and 715–745 (ASQQ…EDHK). Over residues 303–318 (SSDALTDDSMSMTDSS) the composition is skewed to low complexity. An interaction with GSK3B region spans residues 327–413 (MGSKKQLQRE…KEGSEQALSS (87 aa)). The interaction with beta-catenin stretch occupies residues 413 to 478 (SRDGAPVQHP…HHHQHHHHQQ (66 aa)). A compositionally biased stretch (basic residues) spans 468–478 (DHHHQHHHHQQ). One can recognise a DIX domain in the interval 758–840 (ASELVVTYFF…RILGKVERID (83 aa)).

In terms of assembly, interacts with glycogen synthase kinase-3 beta (GSK3B) and beta-catenin. The interaction between axin and beta-catenin occurs via the armadillo repeats contained in beta-catenin. Interacts with SMAD7 and RNF111. Interacts with ANKRD6. Interacts with SIAH1. Interacts with SIAH2. ADP-ribosylated by tankyrase TNKS and TNKS2. Poly-ADP-ribosylated protein is recognized by RNF146, followed by ubiquitination and subsequent activation of the Wnt signaling pathway. Post-translationally, ubiquitinated by RNF146 when poly-ADP-ribosylated, leading to its degradation and subsequent activation of the Wnt signaling pathway. Deubiquitinated by USP34, deubiquitinated downstream of beta-catenin stabilization step: deubiquitination is important Wnt signaling to positively regulate beta-catenin (CTNBB1)-mediated transcription. In terms of processing, probably phosphorylated by GSK3B and dephosphorylated by PP2A. In terms of tissue distribution, expressed in Tcf7-positive innate-like T-cells (at protein level).

It localises to the cytoplasm. Functionally, inhibitor of the Wnt signaling pathway. Down-regulates beta-catenin. Probably facilitate the phosphorylation of beta-catenin and APC by GSK3B. This Mus musculus (Mouse) protein is Axin-2.